The following is a 304-amino-acid chain: tRNA pseudouridine synthase B (304 aa).

Asp-38 (nucleophile) is an active-site residue.

This sequence belongs to the pseudouridine synthase TruB family. Type 1 subfamily.

The catalysed reaction is uridine(55) in tRNA = pseudouridine(55) in tRNA. Its function is as follows. Responsible for synthesis of pseudouridine from uracil-55 in the psi GC loop of transfer RNAs. This is tRNA pseudouridine synthase B from Listeria innocua serovar 6a (strain ATCC BAA-680 / CLIP 11262).